A 213-amino-acid chain; its full sequence is Protein Pars_0011 (213 aa).

An AMMECR1 domain is found at 8-201; it reads EEGRYLVKLA…EREPNEEVYQ (194 aa).

The sequence is that of Protein Pars_0011 from Pyrobaculum arsenaticum (strain DSM 13514 / JCM 11321 / PZ6).